The following is a 518-amino-acid chain: MAPKISISLNPPYNGEFYSSNDQMSGIVSLQLTKALSIRKISVILKGFSETLTKIDQEYMFQQNGMMMPGQDNKSFHTLMKFEQRVFPPDNVWNALDGSSKPFKVKPGSYNYSFQFDKFPRKPECLKNHTAKTVAFVTRSNARLPPTFNSHWQEFNKIDNLDLYFYSFGKVIYMVQVQIELGKSSSWFKPFHKLIREIETFEFIPEPKDLIIEPDEDDNEELNAFSNNSRGNSMVTNNEFFNSSNLKVPSKDVKVVNGVGYIKSDRNFSQANSILIENGDIRSRPVSSVTSTRQSTRLVNGMKVFPSTYKMGLPDGESNMRIEVRSRDLKQIYRKDYLFRSGSQNFDKVYVVMEGNIASLSKMQITPLKLQLNLLETTTYLSQGIANGNYSSLKLIEIDLNQLKSNKPLLDLNEIRENFDGSMFECELRLKDHPILRKLVFNEEDYRHRGNRLYSFKTCTIKRIFSLQLLIEWGINGIRKQSEVNIDPVQIFCQVREHVEAEALPRYVPPPTYTEMAS.

A Glycyl lysine isopeptide (Lys-Gly) (interchain with G-Cter in ubiquitin) cross-link involves residue Lys-118.

It belongs to the ART10 family. Interacts with RSP5. Ubiquitinated by RSP5.

It localises to the cytoplasm. Its function is as follows. May regulate endocytosis by recruiting RSP5 ubiquitin ligase activity to specific plasma membrane proteins in response to extracellular stimuli. The sequence is that of Arrestin-related trafficking adapter 10 (ART10) from Saccharomyces cerevisiae (strain YJM789) (Baker's yeast).